Consider the following 427-residue polypeptide: Beta-1,3-galactosyl-O-glycosyl-glycoprotein beta-1,6-N-acetylglucosaminyltransferase (427 aa).

Residues 1-9 (MLRKLWRRK) lie on the Cytoplasmic side of the membrane. The segment at 5 to 9 (LWRRK) is mediates interaction with GOLPH3 and is necessary and sufficient for localization to the Golgi. The chain crosses the membrane as a helical; Signal-anchor for type II membrane protein span at residues 10-32 (LFSFPTKYYFLFLAFSVVTFTVL). Residues 33-121 (RIHQKTEFVN…EPLSKEEAGF (89 aa)) form a stem region region. Residues 33-427 (RIHQKTEFVN…RHKALETLKP (395 aa)) are Lumenal-facing. N-linked (GlcNAc...) asparagine glycans are attached at residues N58 and N95. 4 cysteine pairs are disulfide-bonded: C59-C412, C100-C172, C151-C199, and C372-C380. Positions 122 to 427 (PIAYSIVVHH…RHKALETLKP (306 aa)) are catalytic. UDP-N-acetyl-alpha-D-glucosamine-binding positions include 128-130 (VVH), 155-157 (DAK), and Y187. E243, K251, R254, E320, K341, and Y358 together coordinate a glycoprotein. E320 acts as the Nucleophile in catalysis. UDP-N-acetyl-alpha-D-glucosamine contacts are provided by R377 and K400.

The protein belongs to the glycosyltransferase 14 family. In terms of assembly, interacts with GOLPH3; may control GCNT1 retention in the Golgi. As to expression, expressed in tracheal submucosal glands and epithelium (at protein level).

It is found in the golgi apparatus membrane. It carries out the reaction a 3-O-[beta-D-galactosyl-(1-&gt;3)-N-acetyl-alpha-D-galactosaminyl]-L-seryl-[protein] + UDP-N-acetyl-alpha-D-glucosamine = 3-O-{beta-D-galactosyl-(1-&gt;3)-[N-acetyl-beta-D-glucosaminyl-(1-&gt;6)]-N-acetyl-alpha-D-galactosaminyl}-L-seryl-[protein] + UDP + H(+). The catalysed reaction is a 3-O-[beta-D-galactosyl-(1-&gt;3)-N-acetyl-alpha-D-galactosaminyl]-L-threonyl-[protein] + UDP-N-acetyl-alpha-D-glucosamine = a 3-O-{beta-D-galactosyl-(1-&gt;3)-[N-acetyl-beta-D-glucosaminyl-(1-&gt;6)]-N-acetyl-alpha-D-galactosaminyl}-L-threonyl-[protein] + UDP + H(+). It catalyses the reaction a globoside GalGb4Cer + UDP-N-acetyl-alpha-D-glucosamine = a globoside GlcNAc-(beta1-&gt;6)-GalGb4Cer + UDP + H(+). The enzyme catalyses a ganglioside GA1 + UDP-N-acetyl-alpha-D-glucosamine = a ganglioside beta-D-GlcNAc-(1-&gt;6)-GA1 + UDP + H(+). It participates in protein modification; protein glycosylation. The protein operates within glycolipid biosynthesis. Glycosyltransferase that catalyzes the transfer of an N-acetylglucosamine (GlcNAc) moiety in beta1-6 linkage from UDP-GlcNAc onto mucin-type core 1 O-glycan to form the branched mucin-type core 2 O-glycan. The catalysis is metal ion-independent and occurs with inversion of the anomeric configuration of sugar donor. Selectively involved in synthesis of mucin-type core 2 O-glycans that serve as scaffolds for the display of selectin ligand sialyl Lewis X epitope by myeloid cells, with an impact on homeostasis and recruitment to inflammatory sites. Can also act on glycolipid substrates. Transfers GlcNAc moiety to GalGb4Cer globosides in a reaction step to the synthesis of stage-specific embryonic antigen 1 (SSEA-1) determinant. Can use Galbeta1-3GalNAcalpha1- and Galbeta1-3GalNAcbeta1- oligosaccharide derivatives as acceptor substrates. This Bos taurus (Bovine) protein is Beta-1,3-galactosyl-O-glycosyl-glycoprotein beta-1,6-N-acetylglucosaminyltransferase (GCNT1).